Consider the following 919-residue polypeptide: Alanine--tRNA ligase (919 aa).

H565, H569, C667, and H671 together coordinate Zn(2+).

Belongs to the class-II aminoacyl-tRNA synthetase family. It depends on Zn(2+) as a cofactor.

The protein resides in the cytoplasm. It carries out the reaction tRNA(Ala) + L-alanine + ATP = L-alanyl-tRNA(Ala) + AMP + diphosphate. Catalyzes the attachment of alanine to tRNA(Ala) in a two-step reaction: alanine is first activated by ATP to form Ala-AMP and then transferred to the acceptor end of tRNA(Ala). Also edits incorrectly charged Ser-tRNA(Ala) and Gly-tRNA(Ala) via its editing domain. The polypeptide is Alanine--tRNA ligase (Leptospira biflexa serovar Patoc (strain Patoc 1 / Ames)).